A 327-amino-acid polypeptide reads, in one-letter code: Ribosomal RNA small subunit methyltransferase H (327 aa).

Residues 36-38, D61, F88, D114, and Q121 contribute to the S-adenosyl-L-methionine site; that span reads GGH.

The protein belongs to the methyltransferase superfamily. RsmH family.

The protein localises to the cytoplasm. The catalysed reaction is cytidine(1402) in 16S rRNA + S-adenosyl-L-methionine = N(4)-methylcytidine(1402) in 16S rRNA + S-adenosyl-L-homocysteine + H(+). Specifically methylates the N4 position of cytidine in position 1402 (C1402) of 16S rRNA. The chain is Ribosomal RNA small subunit methyltransferase H from Chlorobium phaeovibrioides (strain DSM 265 / 1930) (Prosthecochloris vibrioformis (strain DSM 265)).